Consider the following 368-residue polypeptide: Methionine import ATP-binding protein MetN (368 aa).

Positions Ile5–Ile260 constitute an ABC transporter domain. Gly41–Ser48 serves as a coordination point for ATP.

The protein belongs to the ABC transporter superfamily. Methionine importer (TC 3.A.1.24) family. As to quaternary structure, the complex is composed of two ATP-binding proteins (MetN), two transmembrane proteins (MetI) and a solute-binding protein (MetQ).

Its subcellular location is the cell membrane. The enzyme catalyses L-methionine(out) + ATP + H2O = L-methionine(in) + ADP + phosphate + H(+). It carries out the reaction D-methionine(out) + ATP + H2O = D-methionine(in) + ADP + phosphate + H(+). Functionally, part of the ABC transporter complex MetNIQ involved in methionine import. Responsible for energy coupling to the transport system. In Lactococcus lactis subsp. lactis (strain IL1403) (Streptococcus lactis), this protein is Methionine import ATP-binding protein MetN.